Here is a 331-residue protein sequence, read N- to C-terminus: MPKAKISALGCYTPPRVLTNQDLEKLVDTNDQWIMERTGIRERHIAAPEMATSDMAIEAARCALLQRGIDACEIDAIILCTVTPDHLFPSTACLVQNAIGAKGAWGFDLIAACSGFLYGLTTGAHFVMAGTHKKVLVIGSDTMSRIIDYTDRATCVLFGDGAGAMLIEATDEADDGTGFIDFLGEIDGSGGEFLRMPAGGSRRPASHETVDQRMHYVHQEGSQVFKYASRKMYEVCRDLLERNHFKVEDVGLMIPHQANKRIIKAAGDRLGIAPERVMINIERYGNTTAGTLPLATRDAISEGRLKKGDLVLFAAVGAGYTVGASLWRWAF.

Active-site residues include Cys-113 and His-256. The tract at residues 257–261 is ACP-binding; that stretch reads QANKR. The active site involves Asn-286.

It belongs to the thiolase-like superfamily. FabH family. As to quaternary structure, homodimer.

The protein resides in the cytoplasm. The enzyme catalyses malonyl-[ACP] + acetyl-CoA + H(+) = 3-oxobutanoyl-[ACP] + CO2 + CoA. It functions in the pathway lipid metabolism; fatty acid biosynthesis. Catalyzes the condensation reaction of fatty acid synthesis by the addition to an acyl acceptor of two carbons from malonyl-ACP. Catalyzes the first condensation reaction which initiates fatty acid synthesis and may therefore play a role in governing the total rate of fatty acid production. Possesses both acetoacetyl-ACP synthase and acetyl transacylase activities. Its substrate specificity determines the biosynthesis of branched-chain and/or straight-chain of fatty acids. This is Beta-ketoacyl-[acyl-carrier-protein] synthase III from Solibacter usitatus (strain Ellin6076).